Here is a 221-residue protein sequence, read N- to C-terminus: Small ribosomal subunit protein uS5 (221 aa).

The S5 DRBM domain maps to 46–109 (LKDEVIDIKR…INAKLNIMEI (64 aa)).

This sequence belongs to the universal ribosomal protein uS5 family. Part of the 30S ribosomal subunit. Contacts protein S4.

In terms of biological role, with S4 and S12 plays an important role in translational accuracy. This is Small ribosomal subunit protein uS5 from Thermoplasma acidophilum (strain ATCC 25905 / DSM 1728 / JCM 9062 / NBRC 15155 / AMRC-C165).